Here is a 223-residue protein sequence, read N- to C-terminus: Endonuclease V (223 aa).

Mg(2+) contacts are provided by Asp-35 and Asp-103.

It belongs to the endonuclease V family. The cofactor is Mg(2+).

It localises to the cytoplasm. The catalysed reaction is Endonucleolytic cleavage at apurinic or apyrimidinic sites to products with a 5'-phosphate.. DNA repair enzyme involved in the repair of deaminated bases. Selectively cleaves double-stranded DNA at the second phosphodiester bond 3' to a deoxyinosine leaving behind the intact lesion on the nicked DNA. The chain is Endonuclease V from Escherichia coli O45:K1 (strain S88 / ExPEC).